The chain runs to 460 residues: CCA-adding enzyme (460 aa).

Ser50 and Arg53 together coordinate ATP. CTP is bound by residues Ser50 and Arg53. Residues Asp62, Asp64, and Asp117 each contribute to the Mg(2+) site. ATP-binding residues include His140, Lys159, and Tyr168. CTP is bound by residues His140, Lys159, and Tyr168.

The protein belongs to the tRNA nucleotidyltransferase/poly(A) polymerase family. Archaeal CCA-adding enzyme subfamily. Homodimer. The cofactor is Mg(2+).

The catalysed reaction is a tRNA precursor + 2 CTP + ATP = a tRNA with a 3' CCA end + 3 diphosphate. The enzyme catalyses a tRNA with a 3' CCA end + 2 CTP + ATP = a tRNA with a 3' CCACCA end + 3 diphosphate. Functionally, catalyzes the addition and repair of the essential 3'-terminal CCA sequence in tRNAs without using a nucleic acid template. Adds these three nucleotides in the order of C, C, and A to the tRNA nucleotide-73, using CTP and ATP as substrates and producing inorganic pyrophosphate. tRNA 3'-terminal CCA addition is required both for tRNA processing and repair. Also involved in tRNA surveillance by mediating tandem CCA addition to generate a CCACCA at the 3' terminus of unstable tRNAs. While stable tRNAs receive only 3'-terminal CCA, unstable tRNAs are marked with CCACCA and rapidly degraded. This Methanoregula boonei (strain DSM 21154 / JCM 14090 / 6A8) protein is CCA-adding enzyme.